A 556-amino-acid polypeptide reads, in one-letter code: DNA ligase B (556 aa).

Catalysis depends on Lys-124, which acts as the N6-AMP-lysine intermediate.

The protein belongs to the NAD-dependent DNA ligase family. LigB subfamily.

It carries out the reaction NAD(+) + (deoxyribonucleotide)n-3'-hydroxyl + 5'-phospho-(deoxyribonucleotide)m = (deoxyribonucleotide)n+m + AMP + beta-nicotinamide D-nucleotide.. In terms of biological role, catalyzes the formation of phosphodiester linkages between 5'-phosphoryl and 3'-hydroxyl groups in double-stranded DNA using NAD as a coenzyme and as the energy source for the reaction. This chain is DNA ligase B, found in Pseudomonas fluorescens (strain ATCC BAA-477 / NRRL B-23932 / Pf-5).